Here is a 625-residue protein sequence, read N- to C-terminus: Glutamine--fructose-6-phosphate aminotransferase [isomerizing] (625 aa).

C2 serves as the catalytic Nucleophile; for GATase activity. The 228-residue stretch at 2–229 (CGIVGFVGRT…NDQIVTITAD (228 aa)) folds into the Glutamine amidotransferase type-2 domain. SIS domains lie at 296 to 436 (IDES…LRGN) and 470 to 615 (LAQD…VDQP). K620 (for Fru-6P isomerization activity) is an active-site residue.

As to quaternary structure, homodimer.

It localises to the cytoplasm. The enzyme catalyses D-fructose 6-phosphate + L-glutamine = D-glucosamine 6-phosphate + L-glutamate. Its function is as follows. Catalyzes the first step in hexosamine metabolism, converting fructose-6P into glucosamine-6P using glutamine as a nitrogen source. This chain is Glutamine--fructose-6-phosphate aminotransferase [isomerizing], found in Corynebacterium diphtheriae (strain ATCC 700971 / NCTC 13129 / Biotype gravis).